A 162-amino-acid polypeptide reads, in one-letter code: Phospholipase A and acyltransferase 3 (162 aa).

Residues 1-133 are Cytoplasmic-facing; it reads MLAPIPEPKP…VPRSDQVRDA (133 aa). An LRAT domain is found at 13 to 129; that stretch reads LIEIFRPMYR…LRYGVPRSDQ (117 aa). Active-site residues include His-23 and His-35. Residue Cys-113 is the Acyl-thioester intermediate of the active site. Residues 134–154 form a helical membrane-spanning segment; it reads VKAVGIAGVGLAALGLVGVML. Over 155-162 the chain is Lumenal; it reads SRNKKQKQ.

This sequence belongs to the H-rev107 family. As to quaternary structure, interacts with PPP2R1A; this interaction might decrease PP2A activity. As to expression, ubiquitously expressed in normal tissues but down-regulated in primary carcinomas or in many cell lines derived from tumors. Highly expressed in white adipose tissue and in adipocytes. Expressed at lower levels in brown adipose tissue.

The protein resides in the cell membrane. It localises to the cytoplasm. The protein localises to the cytosol. It is found in the perinuclear region. Its subcellular location is the peroxisome membrane. The protein resides in the mitochondrion membrane. It localises to the nucleus envelope. The protein localises to the lysosome membrane. It is found in the endoplasmic reticulum membrane. The enzyme catalyses a 1,2-diacyl-sn-glycero-3-phosphocholine + H2O = a 1-acyl-sn-glycero-3-phosphocholine + a fatty acid + H(+). It carries out the reaction a 1,2-diacyl-sn-glycero-3-phosphocholine + H2O = a 2-acyl-sn-glycero-3-phosphocholine + a fatty acid + H(+). It catalyses the reaction 1,2-dihexadecanoyl-sn-glycero-3-phosphocholine + H2O = 1-hexadecanoyl-sn-glycero-3-phosphocholine + hexadecanoate + H(+). The catalysed reaction is 1,2-dihexadecanoyl-sn-glycero-3-phosphocholine + H2O = 2-hexadecanoyl-sn-glycero-3-phosphocholine + hexadecanoate + H(+). The enzyme catalyses 1-hexadecanoyl-2-(9Z-octadecenoyl)-sn-glycero-3-phosphocholine + H2O = 2-(9Z-octadecenoyl)-sn-glycero-3-phosphocholine + hexadecanoate + H(+). It carries out the reaction 1-hexadecanoyl-2-(9Z-octadecenoyl)-sn-glycero-3-phosphocholine + H2O = 1-hexadecanoyl-sn-glycero-3-phosphocholine + (9Z)-octadecenoate + H(+). It catalyses the reaction 1-hexadecanoyl-2-(5Z,8Z,11Z,14Z-eicosatetraenoyl)-sn-glycero-3-phosphocholine + H2O = 1-hexadecanoyl-sn-glycero-3-phosphocholine + (5Z,8Z,11Z,14Z)-eicosatetraenoate + H(+). The catalysed reaction is 1-hexadecanoyl-2-(5Z,8Z,11Z,14Z-eicosatetraenoyl)-sn-glycero-3-phosphocholine + H2O = 2-(5Z,8Z,11Z,14Z)-eicosatetraenoyl-sn-glycero-3-phosphocholine + hexadecanoate + H(+). The enzyme catalyses 1-hexadecanoyl-2-(9Z,12Z-octadecadienoyl)-sn-glycero-3-phosphoethanolamine + H2O = 1-hexadecanoyl-sn-glycero-3-phosphoethanolamine + (9Z,12Z)-octadecadienoate + H(+). It carries out the reaction 1-hexadecanoyl-2-(9Z,12Z-octadecadienoyl)-sn-glycero-3-phosphoethanolamine + H2O = 2-(9Z,12Z)-octadecadienoyl-sn-glycero-3-phosphoethanolamine + hexadecanoate + H(+). It catalyses the reaction 1-hexadecanoyl-2-(5Z,8Z,11Z,14Z-eicosatetraenoyl)-sn-glycero-3-phosphoethanolamine + H2O = 1-hexadecanoyl-sn-glycero-3-phosphoethanolamine + (5Z,8Z,11Z,14Z)-eicosatetraenoate + H(+). The catalysed reaction is 1-hexadecanoyl-2-(5Z,8Z,11Z,14Z-eicosatetraenoyl)-sn-glycero-3-phosphoethanolamine + H2O = 2-(5Z,8Z,11Z,14Z)-eicosatetraenoyl-sn-glycero-3-phosphoethanolamine + hexadecanoate + H(+). The enzyme catalyses 1-hexanoyl-2-acyl-sn-glycero-3-phosphocholine + H2O = hexanoate + a 2-acyl-sn-glycero-3-phosphocholine + H(+). It carries out the reaction 1-hexanoyl-2-acyl-sn-glycero-3-phosphocholine + H2O = 1-hexanoyl-sn-glycero-3-phosphocholine + a fatty acid + H(+). It catalyses the reaction 1,2-diheptadecanoyl-sn-glycero-3-phosphoethanolamine + 1-(9Z-octadecenoyl)-2-hexadecanoyl-sn-glycero-3-phosphocholine = 1,2-diheptadecanoyl-sn-glycero-3-phospho-N-hexadecanoyl-ethanolamine + 1-(9Z-octadecenoyl)-sn-glycero-3-phosphocholine + H(+). The catalysed reaction is 1,2-diheptadecanoyl-sn-glycero-3-phosphoethanolamine + 1-(9Z-octadecenoyl)-2-hexadecanoyl-sn-glycero-3-phosphocholine = 1,2-diheptadecanoyl-sn-glycero-3-phospho-N-(9Z-octadecenoyl)-ethanolamine + 2-hexadecanoyl-sn-glycero-3-phosphocholine + H(+). The enzyme catalyses 1,2-dihexanoyl-sn-glycero-3-phosphoethanolamine + 2-heptanoyl-sn-glycero-3-phosphocholine = hexanoyl-sn-glycero-3-phosphoethanolamine + 1-hexanoyl-2-heptanoyl-sn-glycero-3-phosphocholine. It carries out the reaction 1-hexadecanoyl-2-octadecanoyl-sn-glycero-3-phosphocholine + H2O = octadecanoate + 1-hexadecanoyl-sn-glycero-3-phosphocholine + H(+). It catalyses the reaction 1-hexadecanoyl-2-octadecanoyl-sn-glycero-3-phosphocholine + H2O = 2-octadecanoyl-sn-glycero-3-phosphocholine + hexadecanoate + H(+). The catalysed reaction is 1-octadecanoyl-2-hexadecanoyl-sn-glycero-3-phosphocholine + H2O = 1-octadecanoyl-sn-glycero-3-phosphocholine + hexadecanoate + H(+). The enzyme catalyses 1-octadecanoyl-2-hexadecanoyl-sn-glycero-3-phosphocholine + H2O = 2-hexadecanoyl-sn-glycero-3-phosphocholine + octadecanoate + H(+). It carries out the reaction 1-hexadecanoyl-2-(9Z,12Z-octadecadienoyl)-sn-glycero-3-phosphocholine + H2O = (9Z,12Z)-octadecadienoate + 1-hexadecanoyl-sn-glycero-3-phosphocholine + H(+). It catalyses the reaction 1-hexadecanoyl-2-(9Z,12Z-octadecadienoyl)-sn-glycero-3-phosphocholine + H2O = 2-(9Z,12Z-octadecadienoyl)-sn-glycero-3-phosphocholine + hexadecanoate + H(+). The catalysed reaction is 1,2-di-(9Z-octadecenoyl)-sn-glycero-3-phosphocholine + H2O = 2-(9Z-octadecenoyl)-sn-glycero-3-phosphocholine + (9Z)-octadecenoate + H(+). The enzyme catalyses 1,2-dihexadecanoyl-sn-glycero-3-phosphocholine + H2O = hexadecanoyl-sn-glycero-3-phosphocholine + hexadecanoate + H(+). It carries out the reaction 1,2-di-(9Z-octadecenoyl)-sn-glycero-3-phosphocholine + H2O = 1-(9Z-octadecenoyl)-sn-glycero-3-phosphocholine + (9Z)-octadecenoate + H(+). It catalyses the reaction 1,2-di-(9Z-octadecenoyl)-sn-glycero-3-phosphoethanolamine + 1,2-dihexadecanoyl-sn-glycero-3-phosphocholine = hexadecanoyl-sn-glycero-3-phosphocholine + N-hexadecanoyl-1,2-di-(9Z-octadecenoyl)-sn-glycero-3-phosphoethanolamine + H(+). The catalysed reaction is 1,2-di-(9Z,12Z-octadecadienoyl)-sn-glycero-3-phosphocholine + H2O = 1-(9Z,12Z)-octadecadienoyl-sn-glycero-3-phosphocholine + (9Z,12Z)-octadecadienoate + H(+). Functionally, exhibits both phospholipase A1/2 and acyltransferase activities. Shows phospholipase A1 (PLA1) and A2 (PLA2), catalyzing the calcium-independent release of fatty acids from the sn-1 or sn-2 position of glycerophospholipids. For most substrates, PLA1 activity is much higher than PLA2 activity. Shows O-acyltransferase activity, catalyzing the transfer of a fatty acyl group from glycerophospholipid to the hydroxyl group of lysophospholipid. Shows N-acyltransferase activity,catalyzing the calcium-independent transfer of a fatty acyl group at the sn-1 position of phosphatidylcholine (PC) and other glycerophospholipids to the primary amine of phosphatidylethanolamine (PE), forming N-acylphosphatidylethanolamine (NAPE), which serves as precursor for N-acylethanolamines (NAEs). Exhibits high N-acyltransferase activity and low phospholipase A1/2 activity. Required for complete organelle rupture and degradation that occur during eye lens terminal differentiation, when fiber cells that compose the lens degrade all membrane-bound organelles in order to provide lens with transparency to allow the passage of light. Organelle membrane degradation is probably catalyzed by the phospholipase activity. (Microbial infection) Acts as a host factor for picornaviruses: required during early infection to promote viral genome release into the cytoplasm. The protein is Phospholipase A and acyltransferase 3 of Mus musculus (Mouse).